Consider the following 345-residue polypeptide: Anthranilate phosphoribosyltransferase (345 aa).

5-phospho-alpha-D-ribose 1-diphosphate-binding positions include G79, 82-83 (GD), T87, 89-92 (NVST), 106-114 (KHGNRAVSG), and S118. G79 contacts anthranilate. Residue S91 participates in Mg(2+) binding. N109 contributes to the anthranilate binding site. R164 lines the anthranilate pocket. Residues D223 and E224 each contribute to the Mg(2+) site.

This sequence belongs to the anthranilate phosphoribosyltransferase family. In terms of assembly, homodimer. Requires Mg(2+) as cofactor.

It catalyses the reaction N-(5-phospho-beta-D-ribosyl)anthranilate + diphosphate = 5-phospho-alpha-D-ribose 1-diphosphate + anthranilate. It functions in the pathway amino-acid biosynthesis; L-tryptophan biosynthesis; L-tryptophan from chorismate: step 2/5. Its function is as follows. Catalyzes the transfer of the phosphoribosyl group of 5-phosphorylribose-1-pyrophosphate (PRPP) to anthranilate to yield N-(5'-phosphoribosyl)-anthranilate (PRA). The sequence is that of Anthranilate phosphoribosyltransferase from Saccharolobus islandicus (strain M.16.27) (Sulfolobus islandicus).